The following is a 370-amino-acid chain: N-acyl-L-amino acid amidohydrolase (370 aa).

The protein belongs to the peptidase M20 family. In terms of assembly, homotetramer. Co(2+) is required as a cofactor.

It catalyses the reaction an N-acyl-L-amino acid + H2O = an L-alpha-amino acid + a carboxylate. The catalysed reaction is an N-acetyl-L-cysteine-S-conjugate + H2O = an S-substituted L-cysteine + acetate. Hydrolyzes most efficiently N-acetyl derivatives of aromatic amino acids but is also active on other amino acids. L-stereospecific. This Geobacillus stearothermophilus (Bacillus stearothermophilus) protein is N-acyl-L-amino acid amidohydrolase (amaA).